We begin with the raw amino-acid sequence, 545 residues long: Light-independent protochlorophyllide reductase subunit N (545 aa).

3 residues coordinate [4Fe-4S] cluster: C102, C127, and C187.

It belongs to the BchN/ChlN family. As to quaternary structure, protochlorophyllide reductase is composed of three subunits; ChlL, ChlN and ChlB. Forms a heterotetramer of two ChlB and two ChlN subunits. [4Fe-4S] cluster is required as a cofactor.

The protein resides in the plastid. Its subcellular location is the chloroplast. The catalysed reaction is chlorophyllide a + oxidized 2[4Fe-4S]-[ferredoxin] + 2 ADP + 2 phosphate = protochlorophyllide a + reduced 2[4Fe-4S]-[ferredoxin] + 2 ATP + 2 H2O. It participates in porphyrin-containing compound metabolism; chlorophyll biosynthesis (light-independent). In terms of biological role, component of the dark-operative protochlorophyllide reductase (DPOR) that uses Mg-ATP and reduced ferredoxin to reduce ring D of protochlorophyllide (Pchlide) to form chlorophyllide a (Chlide). This reaction is light-independent. The NB-protein (ChlN-ChlB) is the catalytic component of the complex. This chain is Light-independent protochlorophyllide reductase subunit N, found in Chlamydomonas reinhardtii (Chlamydomonas smithii).